An 88-amino-acid polypeptide reads, in one-letter code: MQACMVPGLALCLLLGSLTEAKPLQEYDPYAEPPAMPYWPFSTSDFWNYIQYLQTQGAYPQVEDLARTFFAHFPLGSTLGFHVPYQED.

The signal sequence occupies residues 1–21; sequence MQACMVPGLALCLLLGSLTEA.

This sequence belongs to the otospiralin family. Ear specific.

The protein resides in the secreted. Its function is as follows. May be essential for the survival of the neurosensory epithelium of the inner ear. In Cavia porcellus (Guinea pig), this protein is Otospiralin (OTOS).